The chain runs to 331 residues: Biotin synthase (331 aa).

Residues 52–277 enclose the Radical SAM core domain; sequence PEVEVEGIVS…RTILRYAGGR (226 aa). [4Fe-4S] cluster contacts are provided by cysteine 67, cysteine 71, and cysteine 74. Positions 110, 202, and 272 each coordinate [2Fe-2S] cluster.

The protein belongs to the radical SAM superfamily. Biotin synthase family. In terms of assembly, homodimer. [4Fe-4S] cluster serves as cofactor. [2Fe-2S] cluster is required as a cofactor.

The enzyme catalyses (4R,5S)-dethiobiotin + (sulfur carrier)-SH + 2 reduced [2Fe-2S]-[ferredoxin] + 2 S-adenosyl-L-methionine = (sulfur carrier)-H + biotin + 2 5'-deoxyadenosine + 2 L-methionine + 2 oxidized [2Fe-2S]-[ferredoxin]. The protein operates within cofactor biosynthesis; biotin biosynthesis; biotin from 7,8-diaminononanoate: step 2/2. Catalyzes the conversion of dethiobiotin (DTB) to biotin by the insertion of a sulfur atom into dethiobiotin via a radical-based mechanism. This Salinispora arenicola (strain CNS-205) protein is Biotin synthase.